The chain runs to 245 residues: Carboxy-S-adenosyl-L-methionine synthase (245 aa).

Residues Tyr-39, 64 to 66, 117 to 118, and Arg-199 each bind S-adenosyl-L-methionine; these read GSS and DI.

This sequence belongs to the class I-like SAM-binding methyltransferase superfamily. Cx-SAM synthase family. As to quaternary structure, homodimer.

The enzyme catalyses prephenate + S-adenosyl-L-methionine = carboxy-S-adenosyl-L-methionine + 3-phenylpyruvate + H2O. Functionally, catalyzes the conversion of S-adenosyl-L-methionine (SAM) to carboxy-S-adenosyl-L-methionine (Cx-SAM). In Desulfotalea psychrophila (strain LSv54 / DSM 12343), this protein is Carboxy-S-adenosyl-L-methionine synthase.